The sequence spans 490 residues: Cytochrome P450 2C19 (490 aa).

Cys-435 provides a ligand contact to heme.

Belongs to the cytochrome P450 family. It depends on heme as a cofactor.

Its subcellular location is the endoplasmic reticulum membrane. It is found in the microsome membrane. It catalyses the reaction an organic molecule + reduced [NADPH--hemoprotein reductase] + O2 = an alcohol + oxidized [NADPH--hemoprotein reductase] + H2O + H(+). It carries out the reaction (5Z,8Z,11Z)-eicosatrienoate + reduced [NADPH--hemoprotein reductase] + O2 = 19-hydroxy-(5Z,8Z,11Z)-eicosatrienoate + oxidized [NADPH--hemoprotein reductase] + H2O + H(+). The catalysed reaction is (5Z,8Z,11Z,14Z)-eicosatetraenoate + reduced [NADPH--hemoprotein reductase] + O2 = 19-hydroxy-(5Z,8Z,11Z,14Z)-eicosatetraenoate + oxidized [NADPH--hemoprotein reductase] + H2O + H(+). The enzyme catalyses (5Z,8Z,11Z,14Z,17Z)-eicosapentaenoate + reduced [NADPH--hemoprotein reductase] + O2 = 19-hydroxy-(5Z,8Z,11Z,14Z,17Z)-eicosapentaenoate + oxidized [NADPH--hemoprotein reductase] + H2O + H(+). It catalyses the reaction (4Z,7Z,10Z,13Z,16Z,19Z)-docosahexaenoate + reduced [NADPH--hemoprotein reductase] + O2 = 21-hydroxy-(4Z,7Z,10Z,13Z,16Z,19Z)-docosahexaenoate + oxidized [NADPH--hemoprotein reductase] + H2O + H(+). It carries out the reaction (5Z,8Z,11Z,14Z)-eicosatetraenoate + reduced [NADPH--hemoprotein reductase] + O2 = (8R,9S)-epoxy-(5Z,11Z,14Z)-eicosatrienoate + oxidized [NADPH--hemoprotein reductase] + H2O + H(+). The catalysed reaction is (5Z,8Z,11Z,14Z)-eicosatetraenoate + reduced [NADPH--hemoprotein reductase] + O2 = (11R,12S)-epoxy-(5Z,8Z,14Z)-eicosatrienoate + oxidized [NADPH--hemoprotein reductase] + H2O + H(+). The enzyme catalyses (5Z,8Z,11Z,14Z)-eicosatetraenoate + reduced [NADPH--hemoprotein reductase] + O2 = (11S,12R)-epoxy-(5Z,8Z,14Z)-eicosatrienoate + oxidized [NADPH--hemoprotein reductase] + H2O + H(+). It catalyses the reaction (5Z,8Z,11Z,14Z)-eicosatetraenoate + reduced [NADPH--hemoprotein reductase] + O2 = (14R,15S)-epoxy-(5Z,8Z,11Z)-eicosatrienoate + oxidized [NADPH--hemoprotein reductase] + H2O + H(+). It carries out the reaction (5Z,8Z,11Z,14Z,17Z)-eicosapentaenoate + reduced [NADPH--hemoprotein reductase] + O2 = (17R,18S)-epoxy-(5Z,8Z,11Z,14Z)-eicosatetraenoate + oxidized [NADPH--hemoprotein reductase] + H2O + H(+). The catalysed reaction is (4Z,7Z,10Z,13Z,16Z,19Z)-docosahexaenoate + reduced [NADPH--hemoprotein reductase] + O2 = (19R,20S)-epoxy-(4Z,7Z,10Z,13Z,16Z)-docosapentaenoate + oxidized [NADPH--hemoprotein reductase] + H2O + H(+). The enzyme catalyses (4Z,7Z,10Z,13Z,16Z,19Z)-docosahexaenoate + reduced [NADPH--hemoprotein reductase] + O2 = (19S,20R)-epoxy-(4Z,7Z,10Z,13Z,16Z)-docosapentaenoate + oxidized [NADPH--hemoprotein reductase] + H2O + H(+). It catalyses the reaction (4R)-limonene + reduced [NADPH--hemoprotein reductase] + O2 = (1R,5S)-carveol + oxidized [NADPH--hemoprotein reductase] + H2O + H(+). It carries out the reaction (4S)-limonene + reduced [NADPH--hemoprotein reductase] + O2 = (1S,5R)-carveol + oxidized [NADPH--hemoprotein reductase] + H2O + H(+). The catalysed reaction is (4S)-limonene + reduced [NADPH--hemoprotein reductase] + O2 = (4S)-perillyl alcohol + oxidized [NADPH--hemoprotein reductase] + H2O + H(+). The enzyme catalyses fenbendazole + reduced [NADPH--hemoprotein reductase] + O2 = 4'-hydroxyfenbendazole + oxidized [NADPH--hemoprotein reductase] + H2O + H(+). It participates in lipid metabolism; fatty acid metabolism. The protein operates within terpene metabolism; (4R)-limonene degradation. Its function is as follows. A cytochrome P450 monooxygenase involved in the metabolism of polyunsaturated fatty acids (PUFA). Mechanistically, uses molecular oxygen inserting one oxygen atom into a substrate, and reducing the second into a water molecule, with two electrons provided by NADPH via cytochrome P450 reductase (NADPH--hemoprotein reductase). Catalyzes the hydroxylation of carbon-hydrogen bonds. Hydroxylates PUFA specifically at the omega-1 position. Catalyzes the epoxidation of double bonds of PUFA. Also metabolizes plant monoterpenes such as limonene. Oxygenates (R)- and (S)-limonene to produce carveol and perillyl alcohol. Responsible for the metabolism of a number of therapeutic agents such as the anticonvulsant drug S-mephenytoin, omeprazole, proguanil, certain barbiturates, diazepam, propranolol, citalopram and imipramine. Hydroxylates fenbendazole at the 4' position. This Homo sapiens (Human) protein is Cytochrome P450 2C19 (CYP2C19).